The chain runs to 330 residues: D-lactate dehydrogenase (330 aa).

NAD(+) contacts are provided by residues 155 to 156 (RI), D175, 206 to 207 (MP), N212, 233 to 235 (MAR), and D259. Residue R235 is part of the active site. E264 is an active-site residue. H296 (proton donor) is an active-site residue.

Belongs to the D-isomer specific 2-hydroxyacid dehydrogenase family.

The enzyme catalyses (R)-lactate + NAD(+) = pyruvate + NADH + H(+). This chain is D-lactate dehydrogenase (ldhD), found in Streptococcus agalactiae serotype V (strain ATCC BAA-611 / 2603 V/R).